Consider the following 171-residue polypeptide: uncharacterized protein (171 aa).

The protein belongs to the IUNH family.

This is an uncharacterized protein from Acidianus ambivalens (Desulfurolobus ambivalens).